An 88-amino-acid polypeptide reads, in one-letter code: Large ribosomal subunit protein bL27 (88 aa).

This sequence belongs to the bacterial ribosomal protein bL27 family.

This chain is Large ribosomal subunit protein bL27, found in Mycobacterium leprae (strain TN).